Here is a 298-residue protein sequence, read N- to C-terminus: Cytochrome c oxidase subunit 2 (298 aa).

An N-terminal signal peptide occupies residues 1 to 29; sequence MMAIATKRRGVAAVMSLGVATMTAVPALA. Q30 carries the pyrrolidone carboxylic acid modification. The Periplasmic portion of the chain corresponds to 30 to 55; the sequence is QDVLGDLPVIGKPVNGGMNFQPASSP. A helical membrane pass occupies residues 56–88; that stretch reads LAHDQQWLDHFVLYIITAVTIFVCLLLLICIVR. At 89–103 the chain is on the cytoplasmic side; that stretch reads FNRRANPVPARFTHN. The chain crosses the membrane as a helical span at residues 104–134; sequence TPIEVIWTLVPVLILVAIGAFSLPILFRSQE. The Periplasmic segment spans residues 135 to 280; that stretch reads MPNDPDLVIK…WLAGAKEEFA (146 aa). Cu cation-binding residues include H210, C245, E247, C249, H253, and M256. The propeptide at 281-298 is C-terminal propeptide; the sequence is ADASDYLPASPVKLASAE.

Belongs to the cytochrome c oxidase subunit 2 family. Requires binuclear copper center (CuA) as cofactor.

The protein resides in the cell inner membrane. The catalysed reaction is 4 Fe(II)-[cytochrome c] + O2 + 8 H(+)(in) = 4 Fe(III)-[cytochrome c] + 2 H2O + 4 H(+)(out). Subunits I and II form the functional core of the enzyme complex. Electrons originating in cytochrome c are transferred via heme a and Cu(A) to the binuclear center formed by heme a3 and Cu(B). This is Cytochrome c oxidase subunit 2 (ctaC) from Paracoccus denitrificans.